Here is a 159-residue protein sequence, read N- to C-terminus: NADH-quinone oxidoreductase subunit B (159 aa).

[4Fe-4S] cluster is bound by residues cysteine 37, cysteine 38, cysteine 102, and cysteine 132.

This sequence belongs to the complex I 20 kDa subunit family. As to quaternary structure, NDH-1 is composed of 14 different subunits. Subunits NuoB, C, D, E, F, and G constitute the peripheral sector of the complex. It depends on [4Fe-4S] cluster as a cofactor.

It localises to the cell inner membrane. The enzyme catalyses a quinone + NADH + 5 H(+)(in) = a quinol + NAD(+) + 4 H(+)(out). NDH-1 shuttles electrons from NADH, via FMN and iron-sulfur (Fe-S) centers, to quinones in the respiratory chain. Couples the redox reaction to proton translocation (for every two electrons transferred, four hydrogen ions are translocated across the cytoplasmic membrane), and thus conserves the redox energy in a proton gradient. The sequence is that of NADH-quinone oxidoreductase subunit B from Vesicomyosocius okutanii subsp. Calyptogena okutanii (strain HA).